The following is a 325-amino-acid chain: Delta(1)-pyrroline-2-carboxylate reductase (325 aa).

The protein belongs to the ornithine cyclodeaminase/mu-crystallin family.

It carries out the reaction L-proline + NAD(+) = 1-pyrroline-2-carboxylate + NADH + H(+). The enzyme catalyses L-proline + NADP(+) = 1-pyrroline-2-carboxylate + NADPH + H(+). Its function is as follows. Catalyzes the reduction of Delta(1)-pyrroline-2-carboxylate (Pyr2C) to L-proline, using preferentially NADPH over NADH as the electron donor. May be involved in a degradation pathway that converts trans-3-hydroxy-L-proline (t3LHyp) to L-proline. The sequence is that of Delta(1)-pyrroline-2-carboxylate reductase from Bacillus cereus (strain ZK / E33L).